The primary structure comprises 887 residues: Alanine--tRNA ligase (887 aa).

His-564, His-568, Cys-675, and His-679 together coordinate Zn(2+). The segment covering 851–866 (GQGGGGRPDMAQGGGP) has biased composition (gly residues). Residues 851-871 (GQGGGGRPDMAQGGGPDGDKA) form a disordered region.

Belongs to the class-II aminoacyl-tRNA synthetase family. Requires Zn(2+) as cofactor.

The protein localises to the cytoplasm. It catalyses the reaction tRNA(Ala) + L-alanine + ATP = L-alanyl-tRNA(Ala) + AMP + diphosphate. Functionally, catalyzes the attachment of alanine to tRNA(Ala) in a two-step reaction: alanine is first activated by ATP to form Ala-AMP and then transferred to the acceptor end of tRNA(Ala). Also edits incorrectly charged Ser-tRNA(Ala) and Gly-tRNA(Ala) via its editing domain. This is Alanine--tRNA ligase from Rhizorhabdus wittichii (strain DSM 6014 / CCUG 31198 / JCM 15750 / NBRC 105917 / EY 4224 / RW1) (Sphingomonas wittichii).